The primary structure comprises 448 residues: MLWLALGPFRAMENQVLVIRIKIPNSGAVDWTVHSGPQLLFRDVLDVIGQVLPEATTTAFEYEDEDGDRITVRSDEEMKAMLSYYYSTVMEQQVNGQLIEPLQIFPRACKPPGERNIHGLKVNTRAGPSQHTSPVVSDSLPSNSLKKSSAELRKILANGQMNEQDIRYRDTLGHGNGGTVYKAYHVPSGKILAVKVILLDITLELQKQIMSELEILYKCDSSYIIGFYGAFFVENRISICTEFMDGGSLDVYRKIPEHVLGRIAVAVVKGLTYLWSLKILHRDVKPSNMLVNTSGQVKLCDFGVSTQLVNSIAKTYVGTNAYMAPERISGEQYGIHSDVWSLGISFMELALGRFPYPQIQKNQGSLMPLQLLQCIVDEDSPVLPLGEFSEPFVHFITQCMRKQPKERPAPEELMGHPFIVQFNDGNATVVSMWVCRALEERRSQQGPP.

Positions V18–N25 are interaction with MAPK7. In terms of domain architecture, PB1 spans V18 to C109. Residues D64–D68 form an interaction with MAP3K2/MAP3K3 region. Residues N116–S144 are disordered. The interval I117–H131 is interaction with MAPK7. The span at A126–S144 shows a compositional bias: polar residues. The 254-residue stretch at I166–I419 folds into the Protein kinase domain. ATP-binding positions include L172 to V180 and K195. The active-site Proton acceptor is the D283. At S311 the chain carries Phosphoserine. The residue at position 315 (T315) is a Phosphothreonine.

The protein belongs to the protein kinase superfamily. STE Ser/Thr protein kinase family. MAP kinase kinase subfamily. In terms of assembly, interacts with PARD6A, MAP3K3 and MAPK7. Forms a complex with SQSTM1 and PRKCZ or PRKCI. Mg(2+) is required as a cofactor. Activated by phosphorylation on Ser/Thr by MAP kinase kinase kinases. In terms of tissue distribution, expressed in the liver and brain (at protein level). Expressed in the liver, muscle, testes, lung, kidney, spleen, heart and brain (at protein level).

The protein localises to the cytoplasm. It localises to the cytosol. Its subcellular location is the membrane. The enzyme catalyses L-seryl-[protein] + ATP = O-phospho-L-seryl-[protein] + ADP + H(+). The catalysed reaction is L-threonyl-[protein] + ATP = O-phospho-L-threonyl-[protein] + ADP + H(+). It catalyses the reaction L-tyrosyl-[protein] + ATP = O-phospho-L-tyrosyl-[protein] + ADP + H(+). Functionally, acts as a scaffold for the formation of a ternary MAP3K2/MAP3K3-MAP3K5-MAPK7 signaling complex. Activation of this pathway appears to play a critical role in protecting cells from stress-induced apoptosis, neuronal survival and cardiac development and angiogenesis. As part of the MAPK/ERK signaling pathway, acts as a negative regulator of apoptosis in cardiomyocytes via promotion of STUB1/CHIP-mediated ubiquitination and degradation of ICER-type isoforms of CREM. The chain is Dual specificity mitogen-activated protein kinase kinase 5 (Map2k5) from Rattus norvegicus (Rat).